Here is a 723-residue protein sequence, read N- to C-terminus: Protein Hook homolog (723 aa).

The region spanning 4-120 (TELCECLVQW…RLLQLILGCA (117 aa)) is the Calponin-homology (CH) domain. Coiled coils occupy residues 162-423 (VLPE…MQLQ) and 457-665 (EIKE…IVSA). The interval 682 to 723 (LANGGPMQGGQSFLARQRQATSRRTTVSTTHPGHARSVNFVN) is disordered. Residues 696 to 711 (ARQRQATSRRTTVSTT) are compositionally biased toward low complexity.

This sequence belongs to the hook family. Interacts with microtubules.

The protein resides in the cytoplasm. The protein localises to the cytoskeleton. In terms of biological role, may function to promote vesicle trafficking and/or fusion. May act to link a number of membrane-bound organelles to the cytoskeleton. In Branchiostoma floridae (Florida lancelet), this protein is Protein Hook homolog.